We begin with the raw amino-acid sequence, 627 residues long: Alpha-terpineol synthase, chloroplastic (627 aa).

Residues 1–53 (MAGITGVMNMKLAARPSSGRHSRGCRPAVVPSAGKQMLLVRRHPPGSASWPTR) constitute a chloroplast transit peptide. Positions 13–90 (AARPSSGRHS…EDRASRNTSS (78 aa)) are disordered. Residues Arg-339, Asp-376, Asp-380, Arg-518, and Asp-521 each contribute to the (2E)-geranyl diphosphate site. Positions 376 and 380 each coordinate Mg(2+). The DDXXD motif signature appears at 376–380 (DDTYD). Asp-521, Ser-525, and Glu-529 together coordinate Mg(2+).

It belongs to the terpene synthase family. Tpsb subfamily. In terms of assembly, monomer. The cofactor is Mg(2+). Mn(2+) is required as a cofactor. In terms of tissue distribution, expressed in seedling leaf sheaths and roots.

It localises to the plastid. Its subcellular location is the chloroplast. It carries out the reaction (2E)-geranyl diphosphate + H2O = (S)-alpha-terpineol + diphosphate. The catalysed reaction is (2E)-geranyl diphosphate = (4S)-limonene + diphosphate. The enzyme catalyses (2E)-geranyl diphosphate = gamma-terpinene + diphosphate. It catalyses the reaction (2E)-geranyl diphosphate = beta-myrcene + diphosphate. It carries out the reaction (2E)-geranyl diphosphate = terpinolene + diphosphate. The catalysed reaction is (2E)-geranyl diphosphate + H2O = 4-terpineol + diphosphate. It participates in secondary metabolite biosynthesis; terpenoid biosynthesis. In terms of biological role, component of the volatile terpenes biosynthesis pathways. Mediates the synthesis of a blend of monoterpenes. Converts mainly geranyl diphosphate to alpha-terpineol. Also triggers the biosynthesis of minor monoterpenes including limonene, gamma-terpinene, beta-myrcene, terpinolene and 4-terpineol. In Zea mays (Maize), this protein is Alpha-terpineol synthase, chloroplastic.